Reading from the N-terminus, the 382-residue chain is 1-deoxy-D-xylulose 5-phosphate reductoisomerase (382 aa).

Residues Thr-10, Gly-11, Ser-12, Ile-13, Gly-36, and Asn-122 each coordinate NADPH. Residue Lys-123 participates in 1-deoxy-D-xylulose 5-phosphate binding. An NADPH-binding site is contributed by Glu-124. Residue Asp-148 coordinates Mn(2+). Ser-149, Glu-150, Ser-174, and His-197 together coordinate 1-deoxy-D-xylulose 5-phosphate. Glu-150 contributes to the Mn(2+) binding site. Residue Gly-203 participates in NADPH binding. 1-deoxy-D-xylulose 5-phosphate-binding residues include Ser-210, Asn-215, Lys-216, and Glu-219. Mn(2+) is bound at residue Glu-219.

This sequence belongs to the DXR family. The cofactor is Mg(2+). Requires Mn(2+) as cofactor.

It catalyses the reaction 2-C-methyl-D-erythritol 4-phosphate + NADP(+) = 1-deoxy-D-xylulose 5-phosphate + NADPH + H(+). The protein operates within isoprenoid biosynthesis; isopentenyl diphosphate biosynthesis via DXP pathway; isopentenyl diphosphate from 1-deoxy-D-xylulose 5-phosphate: step 1/6. Its function is as follows. Catalyzes the NADPH-dependent rearrangement and reduction of 1-deoxy-D-xylulose-5-phosphate (DXP) to 2-C-methyl-D-erythritol 4-phosphate (MEP). The polypeptide is 1-deoxy-D-xylulose 5-phosphate reductoisomerase (Chlorobaculum tepidum (strain ATCC 49652 / DSM 12025 / NBRC 103806 / TLS) (Chlorobium tepidum)).